We begin with the raw amino-acid sequence, 163 residues long: Nucleotide-binding protein NFA_51200 (163 aa).

The protein belongs to the YajQ family.

Functionally, nucleotide-binding protein. The protein is Nucleotide-binding protein NFA_51200 of Nocardia farcinica (strain IFM 10152).